Here is a 290-residue protein sequence, read N- to C-terminus: Acetyl-coenzyme A carboxylase carboxyl transferase subunit beta (290 aa).

The CoA carboxyltransferase N-terminal domain maps to 28-290 (VMTKCPQCKK…GGGESGWWRN (263 aa)). Residues cysteine 32, cysteine 35, cysteine 51, and cysteine 54 each coordinate Zn(2+). The C4-type zinc finger occupies 32-54 (CPQCKKIMYTKELVKNLRVCLSC).

Belongs to the AccD/PCCB family. In terms of assembly, acetyl-CoA carboxylase is a heterohexamer composed of biotin carboxyl carrier protein (AccB), biotin carboxylase (AccC) and two subunits each of ACCase subunit alpha (AccA) and ACCase subunit beta (AccD). Zn(2+) serves as cofactor.

It is found in the cytoplasm. The enzyme catalyses N(6)-carboxybiotinyl-L-lysyl-[protein] + acetyl-CoA = N(6)-biotinyl-L-lysyl-[protein] + malonyl-CoA. Its pathway is lipid metabolism; malonyl-CoA biosynthesis; malonyl-CoA from acetyl-CoA: step 1/1. Component of the acetyl coenzyme A carboxylase (ACC) complex. Biotin carboxylase (BC) catalyzes the carboxylation of biotin on its carrier protein (BCCP) and then the CO(2) group is transferred by the transcarboxylase to acetyl-CoA to form malonyl-CoA. In Geobacillus thermodenitrificans (strain NG80-2), this protein is Acetyl-coenzyme A carboxylase carboxyl transferase subunit beta.